Here is a 29-residue protein sequence, read N- to C-terminus: Glucagon (29 aa).

The protein belongs to the glucagon family.

It localises to the secreted. Glucagon plays a key role in glucose metabolism and homeostasis. Regulates blood glucose by increasing gluconeogenesis and decreasing glycolysis. This chain is Glucagon (GCG), found in Struthio camelus (Common ostrich).